The primary structure comprises 65 residues: Large ribosomal subunit protein bL35 (65 aa).

The disordered stretch occupies residues Met-1–Gln-26. Positions Ala-10 to Gln-26 are enriched in basic residues.

It belongs to the bacterial ribosomal protein bL35 family.

This Histophilus somni (strain 2336) (Haemophilus somnus) protein is Large ribosomal subunit protein bL35.